We begin with the raw amino-acid sequence, 74 residues long: UPF0235 protein tsr1994 (74 aa).

Belongs to the UPF0235 family.

The polypeptide is UPF0235 protein tsr1994 (Thermosynechococcus vestitus (strain NIES-2133 / IAM M-273 / BP-1)).